Consider the following 700-residue polypeptide: Elongation factor G (700 aa).

The tr-type G domain occupies 8–290 (DKYRNIGISA…AVVELLPSPL (283 aa)). GTP-binding positions include 17-24 (AHIDAGKT), 88-92 (DTPGH), and 142-145 (NKMD).

This sequence belongs to the TRAFAC class translation factor GTPase superfamily. Classic translation factor GTPase family. EF-G/EF-2 subfamily.

Its subcellular location is the cytoplasm. Functionally, catalyzes the GTP-dependent ribosomal translocation step during translation elongation. During this step, the ribosome changes from the pre-translocational (PRE) to the post-translocational (POST) state as the newly formed A-site-bound peptidyl-tRNA and P-site-bound deacylated tRNA move to the P and E sites, respectively. Catalyzes the coordinated movement of the two tRNA molecules, the mRNA and conformational changes in the ribosome. This chain is Elongation factor G, found in Polynucleobacter necessarius subsp. necessarius (strain STIR1).